Consider the following 71-residue polypeptide: Small integral membrane protein 31 (71 aa).

Residues 8–28 (LEMAFILLAFVIFSLFTLASI) traverse the membrane as a helical segment. The disordered stretch occupies residues 31–71 (TPDDSNEEEEHEKKGREKKRKKSEKKKNCSEEEHRIEAVEL). Basic residues predominate over residues 46–55 (REKKRKKSEK). The span at 56 to 71 (KKNCSEEEHRIEAVEL) shows a compositional bias: basic and acidic residues. The N-linked (GlcNAc...) asparagine glycan is linked to Asn-58.

The protein localises to the membrane. This Homo sapiens (Human) protein is Small integral membrane protein 31.